A 214-amino-acid polypeptide reads, in one-letter code: Endothelial cell-specific chemotaxis regulator (214 aa).

Residues 1–18 form the signal peptide; the sequence is MRLGSAILGLLLLQGYSS. At 19–130 the chain is on the extracellular side; sequence QPTTTQTSQE…PTPTSESVLT (112 aa). Positions 23–107 are disordered; the sequence is TQTSQEILQK…DATPSPETTS (85 aa). Residues 28–57 show a composition bias toward polar residues; that stretch reads EILQKSSQVSLVSNQPVTPRSSTMDKQSLS. Low complexity predominate over residues 80 to 90; the sequence is RSSSSSSSSSS. Residues 131–151 traverse the membrane as a helical segment; it reads VAAFGVISFIVILVVVVIILV. At 152-214 the chain is on the cytoplasmic side; the sequence is SVVSLRFKCR…KGSMSAEKIL (63 aa). Positions 163–184 are disordered; the sequence is NKESEDPQKPGSSGLSESCSTA. Residues 172–184 show a composition bias toward polar residues; that stretch reads PGSSGLSESCSTA. Phosphoserine occurs at positions 204 and 207.

Belongs to the ECSCR family. Interacts with FLNA. Interacts with the 20S proteasome subunit PSMA7. Post-translationally, may be heavily O-glycosylated. In terms of tissue distribution, expressed in all tissues examined, highest expression was observed in lung and spleen endothelial cells.

It localises to the cell membrane. It is found in the cytoplasm. Its function is as follows. Regulates endothelial chemotaxis and tube formation. Has a role in angiogenesis and apoptosis via modulation of the actin cytoskeleton and facilitation of proteasomal degradation of the apoptosis inhibitors BIRC3/IAP1 and BIRC2/IAP2. The protein is Endothelial cell-specific chemotaxis regulator (Ecscr) of Mus musculus (Mouse).